The primary structure comprises 186 residues: UPF0200 protein PF1294 (186 aa).

7-14 (GMPGSGKG) is a binding site for ATP.

Belongs to the UPF0200 family.

This is UPF0200 protein PF1294 from Pyrococcus furiosus (strain ATCC 43587 / DSM 3638 / JCM 8422 / Vc1).